Reading from the N-terminus, the 410-residue chain is Transcription factor Dp-1 (410 aa).

At Lys3 the chain carries N6-acetyllysine. The residue at position 23 (Ser23) is a Phosphoserine; by CDK2. Residues 77–114 form a disordered region; that stretch reads VVGSPHTPNTHFVSQNQPSDPSPWSAGKRNRKGEKNGK. The segment covering 82-95 has biased composition (polar residues); the sequence is HTPNTHFVSQNQPS. A compositionally biased stretch (basic residues) spans 104 to 114; that stretch reads KRNRKGEKNGK. The interaction with CEBPA stretch occupies residues 105 to 127; the sequence is RNRKGEKNGKGLRHFSMKVCEKV. The DNA-binding element occupies 113–195; sequence GKGLRHFSMK…KKEIKWIGLP (83 aa). The short motif at 161-195 is the DEF box element; sequence DQKNIRRRVYDALNVLMAMNIISKEKKEIKWIGLP. The segment at 204-277 is dimerization; that stretch reads SLEVERQRRL…KKTVIDCSIS (74 aa). The segment at 211–327 is enhances binding of RB protein to E2F; it reads RRLERIKQKQ…DLRVARSLVP (117 aa). The interval 214-246 is DCB1; that stretch reads ERIKQKQSQLQELILQQIAFKNLVQRNRQVEQQ. Residues 259-315 form a DCB2 region; sequence LPFIIVNTSKKTVIDCSISNDKFEYLFNFDNTFEIHDDIEVLKRMGMACGLESGSCS. Residues 370–410 form a disordered region; that stretch reads GALATSSSGSQYSGSRVETPVSCVGEDDEDDEDFNENEEED. The segment covering 375-384 has biased composition (low complexity); sequence SSSGSQYSGS. A compositionally biased stretch (acidic residues) spans 394–410; that stretch reads GEDDEDDEDFNENEEED.

The protein belongs to the E2F/DP family. Component of the E2F:DP transcription factor complex. Forms heterodimers with E2F family members. The complex can interact with hypophosphorylated retinoblastoma protein RB1 and related proteins (RBL1 and RBL2) that inhibit the E2F transactivation domain. This repression involves recruitment of histone deacetylase (HDAC). During the cell cycle, from mid-to-late G1 phase, RB family members become phosphorylated, detach from the DRTF1/E2F complex to render E2F transcriptionally active. Part of the E2F6.com-1 complex in G0 phase is composed of E2F6, MGA, MAX, TFDP1, CBX3, BAT8, EUHMTASE1, RING1, RNF2, MBLR, L3MBTL2 YAF2. Component of the DREAM complex (also named LINC complex) at least composed of E2F4, E2F5, LIN9, LIN37, LIN52, LIN54, MYBL1, MYBL2, RBL1, RBL2, RBBP4, TFDP1 and TFDP2. The complex exists in quiescent cells where it represses cell cycle-dependent genes. It dissociates in S phase when LIN9, LIN37, LIN52 and LIN54 form a subcomplex that binds to MYBL2. The complex TFDP1:E2F1 interacts with CEBPA; the interaction prevents CEBPA binding to target gene promoters and represses its transcriptional activity. In terms of processing, ubiquitinated by the BCR(KBTBD5) complex, leading to its subsequent degradation. Post-translationally, phosphorylation by E2F1-bound cyclin A-CDK2, in the S phase, inhibits E2F-mediated DNA binding and transactivation.

It is found in the nucleus. The protein resides in the cytoplasm. Its function is as follows. Can stimulate E2F-dependent transcription. Binds DNA cooperatively with E2F family members through the E2 recognition site, 5'-TTTC[CG]CGC-3', found in the promoter region of a number of genes whose products are involved in cell cycle regulation or in DNA replication. The E2F1:DP complex appears to mediate both cell proliferation and apoptosis. Blocks adipocyte differentiation by repressing CEBPA binding to its target gene promoters. In Bos taurus (Bovine), this protein is Transcription factor Dp-1 (TFDP1).